The sequence spans 887 residues: Valine--tRNA ligase (887 aa).

A 'HIGH' region motif is present at residues 48 to 58; sequence PNVTGVLHVGH. The 'KMSKS' region signature appears at 527–531; it reads KMSKS. An ATP-binding site is contributed by K530. Residues 814–887 adopt a coiled-coil conformation; sequence LAGLVDIEAE…EASDRLKKLS (74 aa).

This sequence belongs to the class-I aminoacyl-tRNA synthetase family. ValS type 1 subfamily. Monomer.

Its subcellular location is the cytoplasm. It catalyses the reaction tRNA(Val) + L-valine + ATP = L-valyl-tRNA(Val) + AMP + diphosphate. In terms of biological role, catalyzes the attachment of valine to tRNA(Val). As ValRS can inadvertently accommodate and process structurally similar amino acids such as threonine, to avoid such errors, it has a 'posttransfer' editing activity that hydrolyzes mischarged Thr-tRNA(Val) in a tRNA-dependent manner. This is Valine--tRNA ligase from Desulfotalea psychrophila (strain LSv54 / DSM 12343).